The chain runs to 107 residues: MMKVLVVVALLVTLISYSSSEGIDDLEADELLSLMANEQTRKECVPKHHECTSNKHGCCRGNFFKYKCQCTTVVTQDGEQTERCFCGTPPHHKAAELVVGFGKKIFG.

A signal peptide spans 1-20; the sequence is MMKVLVVVALLVTLISYSSS. The propeptide occupies 21–41; it reads EGIDDLEADELLSLMANEQTR. 4 disulfides stabilise this stretch: C44-C59, C51-C68, C58-C86, and C70-C84.

The protein belongs to the neurotoxin 19 (CSTX) family. 04 (U1-Lctx) subfamily. In terms of tissue distribution, expressed by the venom gland.

Its subcellular location is the secreted. This Lycosa singoriensis (Wolf spider) protein is U1-lycotoxin-Ls1c.